Consider the following 156-residue polypeptide: Ribonuclease H (156 aa).

The RNase H type-1 domain occupies Thr2 to Ser144. Mg(2+)-binding residues include Asp11, Glu49, Asp71, and Asp136.

This sequence belongs to the RNase H family. As to quaternary structure, monomer. The cofactor is Mg(2+).

It is found in the cytoplasm. It carries out the reaction Endonucleolytic cleavage to 5'-phosphomonoester.. Its function is as follows. Endonuclease that specifically degrades the RNA of RNA-DNA hybrids. In Nitratidesulfovibrio vulgaris (strain DSM 19637 / Miyazaki F) (Desulfovibrio vulgaris), this protein is Ribonuclease H.